Consider the following 799-residue polypeptide: Target of rapamycin complex 1 subunit TCO89 (799 aa).

Residues 18-41 (NASTVSHQSKPFRQFSTRSRAKSN) form a disordered region. A phosphothreonine mark is found at T52 and T82. 5 positions are modified to phosphoserine: S84, S104, S107, S115, and S144. Residues 97–126 (NQGKRSASFHSPVHNTLLSPKNSSHSNTGT) are compositionally biased toward polar residues. 2 disordered regions span residues 97-171 (NQGK…DNIE) and 201-284 (LQSP…ADID). The segment covering 147 to 156 (DAQESKKSES) has biased composition (basic and acidic residues). Over residues 157-170 (TTDEEVECFSEDNI) the composition is skewed to acidic residues. Residues S203 and S215 each carry the phosphoserine modification. Over residues 213–224 (DKSGTDGKENHR) the composition is skewed to basic and acidic residues. Polar residues predominate over residues 233–243 (LSSNNYFGESS). Residues 244-253 (HSIEHQKDGE) are compositionally biased toward basic and acidic residues. The span at 254 to 269 (TSPSSIETKLNATSVI) shows a compositional bias: polar residues. S290 carries the post-translational modification Phosphoserine. The disordered stretch occupies residues 324 to 391 (AHKSNQKPSH…PDDISSAGTK (68 aa)). Basic and acidic residues predominate over residues 332 to 346 (SHSDEQFDQEDHIDA). Residues 348-363 (RSNSSRKSDSSFMSLR) are compositionally biased toward low complexity. Phosphoserine is present on S397. 2 disordered regions span residues 418–476 (FENS…QSTF) and 538–568 (NKNS…RQSN). 2 stretches are compositionally biased toward polar residues: residues 420–429 (NSSSIQNSLG) and 461–476 (GRSQ…QSTF). S575 is modified (phosphoserine). Residues 663 to 685 (IRKKSHNDAQSIAHSSSDTDHKD) are disordered. Position 707 is a phosphoserine (S707).

It belongs to the TORC subunit TCO89 family. As to quaternary structure, the target of rapamycin complex 1 (TORC1) is composed of at least KOG1, LST8, TCO89 and either TOR1 (TORC1-A) or TOR2 (TORC1-B). Interacts with PIB2; following activation of PIB2 by glutamine or cysteine. TORC1 binds to and is inhibited by FKBP-rapamycin.

It is found in the cell membrane. The protein localises to the vacuole membrane. Functionally, component of TORC1, which regulates multiple cellular processes to control cell growth in response to environmental signals. Nutrient limitation and environmental stress signals cause inactivation of TORC1. Active TORC1 positively controls ribosome biogenesis via control of rRNA, ribosomal protein and tRNA gene expression, and rRNA processing. TORC1 positively controls protein biosynthesis by regulation of mRNA stability, translation initiation factor activity, and high-affinity amino acid permeases that serve to provide amino acids for use by the translation machinery. TORC1 also promotes growth by sequestering a number of nutrient and general stress-responsive transcription factors in the cytoplasm. TORC1 negatively controls macroautophagy, a process to recycle surplus cytoplasmic mass under nutrient starvation conditions. The sequence is that of Target of rapamycin complex 1 subunit TCO89 (TCO89) from Saccharomyces cerevisiae (strain ATCC 204508 / S288c) (Baker's yeast).